The sequence spans 267 residues: Hydroxyethylthiazole kinase (267 aa).

Position 42 (methionine 42) interacts with substrate. Arginine 118 and serine 164 together coordinate ATP. Alanine 191 provides a ligand contact to substrate.

The protein belongs to the Thz kinase family. Requires Mg(2+) as cofactor.

The catalysed reaction is 5-(2-hydroxyethyl)-4-methylthiazole + ATP = 4-methyl-5-(2-phosphooxyethyl)-thiazole + ADP + H(+). It participates in cofactor biosynthesis; thiamine diphosphate biosynthesis; 4-methyl-5-(2-phosphoethyl)-thiazole from 5-(2-hydroxyethyl)-4-methylthiazole: step 1/1. Functionally, catalyzes the phosphorylation of the hydroxyl group of 4-methyl-5-beta-hydroxyethylthiazole (THZ). The polypeptide is Hydroxyethylthiazole kinase (Pasteurella multocida (strain Pm70)).